A 393-amino-acid chain; its full sequence is Purine permease 14 (393 aa).

Ala-2 is modified (N-acetylalanine). The next 10 helical transmembrane spans lie at 46–66 (WPTITISIIFVIIGQSIAKLL), 90–110 (TQSLLQTVGFPLLLLPFLIFI), 133–153 (LAVIYICIGIIMSVQGRLAAM), 161–181 (GVFTLIYTAQLFFTPIFAAFI), 189–209 (WVVISVILAIITGALTLSSSF), 225–245 (WAALFAGICFALLLCNIQNVF), 268–288 (VIIFSSLVATIISVVGLLIAG), 308–328 (VMAMVGQAVSWQVYWVGIVGL), 339–359 (VISVITWPIVSVLVVIFFNFM), and 363–383 (FDAFKGVALVTAVLSAAAYFF).

It belongs to the purine permeases (TC 2.A.7.14) family. Expressed in seedlings, leaves, embryos, ovules, seeds and the root and shoot meristems. In heart-stage embryos, detected in cells that failed to respond to cytokinins, including the prospective cotyledons.

It is found in the cell membrane. In terms of biological role, purine permease implicated in ATP-dependent cytokinin translocation that controls the spatiotemporal landscape of cytokinin signaling. Depletes ligands from the apoplast, which leads to a suppression of the cytokinin response. This Arabidopsis thaliana (Mouse-ear cress) protein is Purine permease 14.